Consider the following 547-residue polypeptide: Mitogen-activated protein kinase 15 (547 aa).

Residues 1-20 (MCAAEVDRHVSQRYLIKRRL) form a ubiquitin-conjugating region. Positions 14–305 (YLIKRRLGKG…AEQALQHPYV (292 aa)) constitute a Protein kinase domain. ATP contacts are provided by residues 20–28 (LGKGAYGIV) and Lys43. Catalysis depends on Asp138, which acts as the Proton acceptor. Residue Thr176 is modified to Phosphothreonine. Positions 176–178 (TEY) match the TXY motif. Tyr178 is modified (phosphotyrosine). The necessary to interact with ESRRA, to regulate its subcellular localization and to inhibit its transcriptional activity stretch occupies residues 266–286 (LDALLPPDTPPEALDLLKRLL). A requires for interaction with GABARAP, MAP1LC3B AND GABARAPL1 region spans residues 301–380 (QHPYVQRFHC…SQRQSLKPGV (80 aa)). Positions 370 to 503 (ASQRQSLKPG…EAPEPRPGRR (134 aa)) are disordered. 2 PXXXP motif repeats span residues 378 to 382 (PGVLP) and 385 to 389 (LAETP). PXXXP motif; regulates binding with chromatin and interaction with PCNA repeat units follow at residues 393–397 (RGPKP) and 401–405 (HGHDP). A compositionally biased stretch (basic and acidic residues) spans 401-414 (HGHDPEHVEVRRQS). Position 449 is an omega-N-methylarginine (Arg449). Residues 454–465 (SLTSQAAAQAAN) are compositionally biased toward polar residues. The segment covering 481 to 490 (AVGARRVPSR) has biased composition (low complexity). The segment covering 491–500 (LPREAPEPRP) has biased composition (basic and acidic residues).

It belongs to the protein kinase superfamily. CMGC Ser/Thr protein kinase family. MAP kinase subfamily. Interacts with CSK/c-Src, ABL1, RET and TGFB1I1. Interacts with GABARAP, MAP1LC3B and GABARAPL1; controls, in a kinase-dependent fashion, both basal and starvation-induced autophagy. Interacts with ESRRA; promotes re-localization of ESRRA to the cytoplasm through a XPO1-dependent mechanism then inhibits ESRRA transcriptional activity. Interacts with PCNA; the interaction is chromatin binding- and kinase activity-dependent and prevents MDM2-mediated PCNA destruction by inhibiting the association of PCNA with MDM2. Interacts with DVL2. Interacts with CLIC3; MAPK15 does not phosphorylates CLIC3. Autophosphorylated on Thr-176 and Tyr-178; activates the enzyme. Post-translationally, dephosphorylated by PTPN1. In terms of processing, ubiquitinated. Ubiquitination may allow its tight kinase activity regulation and rapid turnover. May be ubiquitinated by a SCF E3 ligase. In terms of tissue distribution, ubiquitously expressed at a weak level. Highest expression is found in testis and to a lower extent in lung.

It is found in the cytoplasm. It localises to the cytoskeleton. The protein resides in the cilium basal body. The protein localises to the cell junction. Its subcellular location is the tight junction. It is found in the microtubule organizing center. It localises to the centrosome. The protein resides in the centriole. The protein localises to the cytoplasmic vesicle. Its subcellular location is the autophagosome. It is found in the golgi apparatus. It localises to the nucleus. The protein resides in the spindle. The catalysed reaction is L-seryl-[protein] + ATP = O-phospho-L-seryl-[protein] + ADP + H(+). It catalyses the reaction L-threonyl-[protein] + ATP = O-phospho-L-threonyl-[protein] + ADP + H(+). With respect to regulation, activated by threonine and tyrosine phosphorylation. Inhibited by dual specificity phosphatases, such as DUSP1. Phosphorylation and activation in response to DNA damaging agents, serum stimulation. Constitutively activated when phosphorylated on Tyr-178. Activity depends on the relative rates of MAPK15 autophosphorylation and dephosphorylation by PTPN1. Functionally, atypical MAPK protein that regulates several process such as autophagy, ciliogenesis, protein trafficking/secretion and genome integrity, in a kinase activity-dependent manner. Controls both, basal and starvation-induced autophagy throught its interaction with GABARAP, MAP1LC3B and GABARAPL1 leading to autophagosome formation, SQSTM1 degradation and reduced MAP1LC3B inhibitory phosphorylation. Regulates primary cilium formation and the localization of ciliary proteins involved in cilium structure, transport, and signaling. Prevents the relocation of the sugar-adding enzymes from the Golgi to the endoplasmic reticulum, thereby restricting the production of sugar-coated proteins. Upon amino-acid starvation, mediates transitional endoplasmic reticulum site disassembly and inhibition of secretion. Binds to chromatin leading to MAPK15 activation and interaction with PCNA, that which protects genomic integrity by inhibiting MDM2-mediated degradation of PCNA. Regulates DA transporter (DAT) activity and protein expression via activation of RhoA. In response to H(2)O(2) treatment phosphorylates ELAVL1, thus preventing it from binding to the PDCD4 3'UTR and rendering the PDCD4 mRNA accessible to miR-21 and leading to its degradation and loss of protein expression. Also functions in a kinase activity-independent manner as a negative regulator of growth. Phosphorylates in vitro FOS and MBP. During oocyte maturation, plays a key role in the microtubule organization and mei- otic cell cycle progression in oocytes, fertilized eggs, and early embryos. Interacts with ESRRA promoting its re-localization from the nucleus to the cytoplasm and then prevents its transcriptional activity. In Rattus norvegicus (Rat), this protein is Mitogen-activated protein kinase 15 (Mapk15).